The chain runs to 651 residues: Altered inheritance of mitochondria protein 21 (651 aa).

A disordered region spans residues 1–85; it reads MPSEVTPKVP…LQRPVRRSTT (85 aa). Over residues 9 to 19 the composition is skewed to basic and acidic residues; sequence VPERPSRRKTS. The residue at position 18 (threonine 18) is a Phosphothreonine. Phosphoserine is present on serine 36. Threonine 58 carries the post-translational modification Phosphothreonine. Serine 70 is subject to Phosphoserine. Threonine 85 is modified (phosphothreonine). Position 104 is a phosphoserine (serine 104). Residues 110–119 show a composition bias toward basic residues; it reads NIHNVSRKKS. Disordered stretches follow at residues 110–522 and 549–651; these read NIHN…EKIE and IDTT…FHSL. Composition is skewed to polar residues over residues 133-149 and 164-178; these read QNGQ…TNPS and SAIS…SNNE. Residues 179–213 are compositionally biased toward basic and acidic residues; the sequence is VTEHSDSEDLTEKQKVHAALDNEAGDRSHFEEKLI. Phosphoserine is present on residues serine 183, serine 206, and serine 231. Residues 243–272 show a composition bias toward basic and acidic residues; the sequence is SDDKAEKFTKHPESSLEELQKHQEQQEEKI. Threonine 277 is subject to Phosphothreonine. Serine 284 carries the post-translational modification Phosphoserine. Polar residues predominate over residues 296-323; sequence EVNSQPQGPSDTETVIAATSSNVPSQIA. A Phosphoserine modification is found at serine 324. Composition is skewed to basic and acidic residues over residues 339 to 361 and 372 to 383; these read KKDF…RVSE and EESKIPKIPSER. The interval 383–396 is interaction with SH3 domain of ABP1; the sequence is RPKRRAPPPVPKKP. Composition is skewed to polar residues over residues 414-427 and 437-452; these read DLHN…TTAS and SSIT…TSKL. Positions 471-482 are enriched in basic and acidic residues; that stretch reads LEKKLSSPDTES. The segment covering 501–512 has biased composition (basic residues); sequence RRGRGPRGRKLP. A Phosphothreonine modification is found at threonine 552. Residues 556–567 are compositionally biased toward basic and acidic residues; that stretch reads QAERALDEKEKL. Residues 575-586 show a composition bias toward polar residues; it reads PLSQLPQTNTVG. Residues serine 592, serine 595, serine 597, serine 599, serine 639, serine 643, serine 647, and serine 650 each carry the phosphoserine modification. Over residues 594–605 the composition is skewed to polar residues; that stretch reads ESLSPSEAITNR. Residues 639-651 are compositionally biased toward basic and acidic residues; sequence SALHSEEASFHSL.

The protein belongs to the AIM21 family. In terms of assembly, interacts with ribosomes. Interacts with ABP1.

The protein localises to the cytoplasm. It localises to the cytoskeleton. The protein resides in the actin patch. In terms of biological role, involved in mitochondrial migration along actin filaments. This is Altered inheritance of mitochondria protein 21 (AIM21) from Saccharomyces cerevisiae (strain RM11-1a) (Baker's yeast).